The sequence spans 624 residues: Polygalacturonase 1 beta-like protein 2 (624 aa).

The N-terminal stretch at 1 to 26 (MNNIEATLFLCFFCIFSSSNVHFAGA) is a signal peptide. The FXXY 1 repeat unit spans residues 121 to 124 (FAAY). N128 is a glycosylation site (N-linked (GlcNAc...) asparagine). 11 FXXY repeats span residues 129–132 (FTNY), 143–146 (FKNY), 157–160 (FRRY), 171–174 (FTNY), 185–188 (FTTY), 199–202 (FTNY), 213–216 (FTSY), 227–230 (FTTY), 241–244 (FTSY), 255–258 (FSGY), and 269–272 (FTKY). Residue N145 is glycosylated (N-linked (GlcNAc...) asparagine). A disordered region spans residues 199-219 (FTNYNTDANEPNGRFTSYSDK). N280 is a glycosylation site (N-linked (GlcNAc...) asparagine). 5 FXXY repeats span residues 283–286 (FTSY), 297–300 (FKGY), 311–314 (FKNY), 325–328 (FSSY), and 339–342 (FVNY). An N-linked (GlcNAc...) asparagine glycan is attached at N352. An FXXY 18 repeat occupies 353–356 (FTGY). N364 carries an N-linked (GlcNAc...) asparagine glycan. FXXY repeat units follow at residues 367 to 370 (FKTY), 376 to 379 (FKVY), and 386 to 389 (FARY). N-linked (GlcNAc...) asparagine glycans are attached at residues N392 and N463. A BURP domain is found at 409–623 (FFREAMLKEG…FENDMTWNII (215 aa)).

In terms of tissue distribution, expressed in flowers and stems.

The protein resides in the secreted. It localises to the extracellular space. Its subcellular location is the apoplast. The protein localises to the cell wall. Functionally, involved in cell size determination. In Arabidopsis thaliana (Mouse-ear cress), this protein is Polygalacturonase 1 beta-like protein 2.